We begin with the raw amino-acid sequence, 480 residues long: Glutamate--tRNA ligase (480 aa).

The 'HIGH' region motif lies at 21-31 (PSPTGYLHVGG). Zn(2+) contacts are provided by Cys-110, Cys-112, Cys-137, and His-139. The 'KMSKS' region signature appears at 248-252 (KLSKR). Residue Lys-251 participates in ATP binding.

It belongs to the class-I aminoacyl-tRNA synthetase family. Glutamate--tRNA ligase type 1 subfamily. Monomer. Zn(2+) is required as a cofactor.

It is found in the cytoplasm. It catalyses the reaction tRNA(Glu) + L-glutamate + ATP = L-glutamyl-tRNA(Glu) + AMP + diphosphate. In terms of biological role, catalyzes the attachment of glutamate to tRNA(Glu) in a two-step reaction: glutamate is first activated by ATP to form Glu-AMP and then transferred to the acceptor end of tRNA(Glu). The sequence is that of Glutamate--tRNA ligase from Histophilus somni (strain 129Pt) (Haemophilus somnus).